The primary structure comprises 469 residues: Transcription factor phomD (469 aa).

Residues 14–41 (CNACNESKVRCSQRKPTCARCERNGVEC) constitute a DNA-binding region (zn(2)-C6 fungal-type). The segment at 49–118 (THKDAPPISM…QQKEEAAAAA (70 aa)) is disordered. A compositionally biased stretch (polar residues) spans 82 to 93 (KANSNSSSNWHM). Over residues 104 to 118 (QQQQQQQKEEAAAAA) the composition is skewed to low complexity.

The protein resides in the nucleus. Functionally, transcription factor; part of the gene cluster that mediates the biosynthesis of the phomopsins, a group of hexapeptide mycotoxins which infects lupins and causes lupinosis disease in livestock. May play a role in the regulation of the production of phomopsins. The protein is Transcription factor phomD of Diaporthe leptostromiformis (Lupinosis disease fungus).